A 144-amino-acid polypeptide reads, in one-letter code: 3-dehydroquinate dehydratase (144 aa).

Tyr-24 acts as the Proton acceptor in catalysis. 3 residues coordinate substrate: Asn-76, His-82, and Asp-89. His-102 serves as the catalytic Proton donor. Residues 103 to 104 (LS) and Arg-113 each bind substrate.

Belongs to the type-II 3-dehydroquinase family. As to quaternary structure, homododecamer.

It catalyses the reaction 3-dehydroquinate = 3-dehydroshikimate + H2O. It functions in the pathway metabolic intermediate biosynthesis; chorismate biosynthesis; chorismate from D-erythrose 4-phosphate and phosphoenolpyruvate: step 3/7. Its function is as follows. Catalyzes a trans-dehydration via an enolate intermediate. The sequence is that of 3-dehydroquinate dehydratase from Bordetella bronchiseptica (strain ATCC BAA-588 / NCTC 13252 / RB50) (Alcaligenes bronchisepticus).